Here is a 517-residue protein sequence, read N- to C-terminus: Crotonobetaine/carnitine--CoA ligase (517 aa).

Belongs to the ATP-dependent AMP-binding enzyme family.

It carries out the reaction 4-(trimethylamino)butanoate + ATP + CoA = 4-(trimethylamino)butanoyl-CoA + AMP + diphosphate. It catalyses the reaction crotonobetaine + ATP + CoA = crotonobetainyl-CoA + AMP + diphosphate. The catalysed reaction is (R)-carnitine + ATP + CoA = (R)-carnitinyl-CoA + AMP + diphosphate. It functions in the pathway amine and polyamine metabolism; carnitine metabolism. Its function is as follows. Catalyzes the transfer of CoA to carnitine, generating the initial carnitinyl-CoA needed for the CaiB reaction cycle. Also has activity toward crotonobetaine and gamma-butyrobetaine. This chain is Crotonobetaine/carnitine--CoA ligase, found in Citrobacter koseri (strain ATCC BAA-895 / CDC 4225-83 / SGSC4696).